Here is a 415-residue protein sequence, read N- to C-terminus: Tyrosine--tRNA ligase (415 aa).

Tyrosine 34 lines the L-tyrosine pocket. The 'HIGH' region signature appears at 39 to 48 (PSADSLHLGN). L-tyrosine-binding residues include tyrosine 162 and glutamine 166. The short motif at 224–228 (KFGKS) is the 'KMSKS' region element. Lysine 227 lines the ATP pocket. In terms of domain architecture, S4 RNA-binding spans 346–413 (IKIIDLLNLA…KRNYFLILWN (68 aa)).

Belongs to the class-I aminoacyl-tRNA synthetase family. TyrS type 1 subfamily. Homodimer.

The protein resides in the cytoplasm. It catalyses the reaction tRNA(Tyr) + L-tyrosine + ATP = L-tyrosyl-tRNA(Tyr) + AMP + diphosphate + H(+). Catalyzes the attachment of tyrosine to tRNA(Tyr) in a two-step reaction: tyrosine is first activated by ATP to form Tyr-AMP and then transferred to the acceptor end of tRNA(Tyr). This is Tyrosine--tRNA ligase from Ureaplasma parvum serovar 3 (strain ATCC 27815 / 27 / NCTC 11736).